A 128-amino-acid chain; its full sequence is Large ribosomal subunit protein bL17 (128 aa).

It belongs to the bacterial ribosomal protein bL17 family. In terms of assembly, part of the 50S ribosomal subunit. Contacts protein L32.

The polypeptide is Large ribosomal subunit protein bL17 (Streptococcus agalactiae serotype Ia (strain ATCC 27591 / A909 / CDC SS700)).